A 214-amino-acid chain; its full sequence is Melanoregulin (214 aa).

The short motif at 162-172 is the Cholesterol-binding sequence motif element; it reads LSERYLLVVDR. Phosphoserine is present on Ser-213.

It belongs to the melanoregulin family. In terms of assembly, identified in a complex with RILP and DCTN1; interacts directly with RILP, but does not interact directly with DCTN1. Interacts with PRPH2. Palmitoylated. Palmitoylation is required to maintain the protein at the melanosome membrane. Detected in melanocytes. Expressed in retina, in retinal pigment epithelium (at protein level). Widely expressed with higher expression in skin, heart, liver, testis and thymus. Detected in retina, in retinal pigment epithelium cells.

The protein localises to the apical cell membrane. It is found in the melanosome membrane. The protein resides in the lysosome membrane. Its subcellular location is the cytoplasmic vesicle membrane. Its function is as follows. Probably functions as a cargo-recognition protein that couples cytoplasmic vesicles to the transport machinery. Plays a role in hair pigmentation, a process that involves shedding of melanosome-containing vesicles from melanocytes, followed by phagocytosis of the melanosome-containing vesicles by keratinocytes. Functions on melanosomes as receptor for RILP and the complex formed by RILP and DCTN1, and thereby contributes to retrograde melanosome transport from the cell periphery to the center. Overexpression causes accumulation of late endosomes and/or lysosomes at the microtubule organising center (MTOC) at the center of the cell. Probably binds cholesterol and requires the presence of cholesterol in membranes to function in microtubule-mediated retrograde organelle transport. Binds phosphatidylinositol 3-phosphate, phosphatidylinositol 4-phosphate, phosphatidylinositol 5-phosphate and phosphatidylinositol 3,5-bisphosphate, but not phosphatidylinositol 3,4-bisphosphate or phosphatidylinositol 4,5-bisphosphate. Required for normal phagosome clearing and normal activation of lysosomal enzymes in lysosomes from retinal pigment epithelium cells. Required for normal degradation of the lipofuscin component N-retinylidene-N-retinylethanolamine (A2E) in the eye. May function in membrane fusion and regulate the biogenesis of disk membranes of photoreceptor rod cells. The protein is Melanoregulin (Mreg) of Mus musculus (Mouse).